The sequence spans 227 residues: Cytochrome c oxidase subunit 2 (227 aa).

At 1–14 (MAHPVQLGLQDATS) the chain is on the mitochondrial intermembrane side. A helical transmembrane segment spans residues 15 to 45 (PVMEELVTFHDHALMAMFLISFLILYALSAT). Over 46 to 59 (LTTKLTNTNITDAQ) the chain is Mitochondrial matrix. Residues 60–87 (EMETIWTILPAVILVLIALPSLRILYMT) traverse the membrane as a helical segment. Topologically, residues 88–227 (DEINNPSFTI…IFEMGPVFTL (140 aa)) are mitochondrial intermembrane. Positions 161, 196, 198, 200, 204, and 207 each coordinate Cu cation. Mg(2+) is bound at residue Glu198.

It belongs to the cytochrome c oxidase subunit 2 family. Component of the cytochrome c oxidase (complex IV, CIV), a multisubunit enzyme composed of 14 subunits. The complex is composed of a catalytic core of 3 subunits MT-CO1, MT-CO2 and MT-CO3, encoded in the mitochondrial DNA, and 11 supernumerary subunits COX4I, COX5A, COX5B, COX6A, COX6B, COX6C, COX7A, COX7B, COX7C, COX8 and NDUFA4, which are encoded in the nuclear genome. The complex exists as a monomer or a dimer and forms supercomplexes (SCs) in the inner mitochondrial membrane with NADH-ubiquinone oxidoreductase (complex I, CI) and ubiquinol-cytochrome c oxidoreductase (cytochrome b-c1 complex, complex III, CIII), resulting in different assemblies (supercomplex SCI(1)III(2)IV(1) and megacomplex MCI(2)III(2)IV(2)). Found in a complex with TMEM177, COA6, COX18, COX20, SCO1 and SCO2. Interacts with TMEM177 in a COX20-dependent manner. Interacts with COX20. Interacts with COX16. The cofactor is Cu cation.

It localises to the mitochondrion inner membrane. The enzyme catalyses 4 Fe(II)-[cytochrome c] + O2 + 8 H(+)(in) = 4 Fe(III)-[cytochrome c] + 2 H2O + 4 H(+)(out). Its function is as follows. Component of the cytochrome c oxidase, the last enzyme in the mitochondrial electron transport chain which drives oxidative phosphorylation. The respiratory chain contains 3 multisubunit complexes succinate dehydrogenase (complex II, CII), ubiquinol-cytochrome c oxidoreductase (cytochrome b-c1 complex, complex III, CIII) and cytochrome c oxidase (complex IV, CIV), that cooperate to transfer electrons derived from NADH and succinate to molecular oxygen, creating an electrochemical gradient over the inner membrane that drives transmembrane transport and the ATP synthase. Cytochrome c oxidase is the component of the respiratory chain that catalyzes the reduction of oxygen to water. Electrons originating from reduced cytochrome c in the intermembrane space (IMS) are transferred via the dinuclear copper A center (CU(A)) of subunit 2 and heme A of subunit 1 to the active site in subunit 1, a binuclear center (BNC) formed by heme A3 and copper B (CU(B)). The BNC reduces molecular oxygen to 2 water molecules using 4 electrons from cytochrome c in the IMS and 4 protons from the mitochondrial matrix. The chain is Cytochrome c oxidase subunit 2 (MT-CO2) from Theropithecus gelada (Gelada baboon).